The sequence spans 243 residues: Venom nerve growth factor 1 (243 aa).

Positions 1 to 18 (MSMLCYTLIIAFLIGIWA) are cleaved as a signal peptide. The propeptide occupies 19-125 (APKSEDNVPL…TLNRNIRAKR (107 aa)). A compositionally biased stretch (basic and acidic residues) spans 47–66 (GLKTSRNTDQRHPAPKKAED). The interval 47–69 (GLKTSRNTDQRHPAPKKAEDQEL) is disordered. 3 disulfides stabilise this stretch: Cys-139-Cys-204, Cys-182-Cys-232, and Cys-192-Cys-234. Asn-148 carries N-linked (GlcNAc...) asparagine glycosylation.

It belongs to the NGF-beta family. As to quaternary structure, homodimer; non-covalently linked. In terms of tissue distribution, expressed by the venom gland.

The protein resides in the secreted. Functionally, nerve growth factor is important for the development and maintenance of the sympathetic and sensory nervous systems. It stimulates division and differentiation of sympathetic and embryonic sensory neurons as well as basal forebrain cholinergic neurons in the brain. Its relevance in the snake venom is not clear. However, it has been shown to inhibit metalloproteinase-dependent proteolysis of platelet glycoprotein Ib alpha, suggesting a metalloproteinase inhibition to prevent metalloprotease autodigestion and/or protection against prey proteases. Binds a lipid between the two protein chains in the homodimer. The lipid-bound form promotes histamine relase from mouse mast cells, contrary to the lipid-free form. This Oxyuranus microlepidotus (Inland taipan) protein is Venom nerve growth factor 1.